Reading from the N-terminus, the 366-residue chain is Spermidine/putrescine import ATP-binding protein PotA (366 aa).

Residues 14-247 (ISARALRKVY…PADRFVADFI (234 aa)) enclose the ABC transporter domain. 49–56 (GPSGCGKT) lines the ATP pocket.

Belongs to the ABC transporter superfamily. Spermidine/putrescine importer (TC 3.A.1.11.1) family. As to quaternary structure, the complex is composed of two ATP-binding proteins (PotA), two transmembrane proteins (PotB and PotC) and a solute-binding protein (PotD).

The protein localises to the cell inner membrane. The catalysed reaction is ATP + H2O + polyamine-[polyamine-binding protein]Side 1 = ADP + phosphate + polyamineSide 2 + [polyamine-binding protein]Side 1.. Part of the ABC transporter complex PotABCD involved in spermidine/putrescine import. Responsible for energy coupling to the transport system. This chain is Spermidine/putrescine import ATP-binding protein PotA, found in Ruegeria pomeroyi (strain ATCC 700808 / DSM 15171 / DSS-3) (Silicibacter pomeroyi).